The sequence spans 413 residues: Gamma-glutamyl phosphate reductase (413 aa).

Belongs to the gamma-glutamyl phosphate reductase family.

The protein resides in the cytoplasm. The catalysed reaction is L-glutamate 5-semialdehyde + phosphate + NADP(+) = L-glutamyl 5-phosphate + NADPH + H(+). Its pathway is amino-acid biosynthesis; L-proline biosynthesis; L-glutamate 5-semialdehyde from L-glutamate: step 2/2. Its function is as follows. Catalyzes the NADPH-dependent reduction of L-glutamate 5-phosphate into L-glutamate 5-semialdehyde and phosphate. The product spontaneously undergoes cyclization to form 1-pyrroline-5-carboxylate. This chain is Gamma-glutamyl phosphate reductase, found in Lactococcus lactis subsp. cremoris (strain MG1363).